Consider the following 181-residue polypeptide: ATP-dependent protease subunit HslV (181 aa).

Thr8 is a catalytic residue. Na(+) is bound by residues Gly165, Cys168, and Thr171.

It belongs to the peptidase T1B family. HslV subfamily. A double ring-shaped homohexamer of HslV is capped on each side by a ring-shaped HslU homohexamer. The assembly of the HslU/HslV complex is dependent on binding of ATP.

The protein resides in the cytoplasm. The enzyme catalyses ATP-dependent cleavage of peptide bonds with broad specificity.. Allosterically activated by HslU binding. Functionally, protease subunit of a proteasome-like degradation complex believed to be a general protein degrading machinery. This chain is ATP-dependent protease subunit HslV, found in Oceanobacillus iheyensis (strain DSM 14371 / CIP 107618 / JCM 11309 / KCTC 3954 / HTE831).